A 560-amino-acid chain; its full sequence is MKVWMAILISILCWQSSVWAVCPAWSPARAQEEISRLQQQIKQWDDDYWKEGKSEVEDGVYDQLSARLTQWQRCFGSEPRDVMMPPLNGAVMHPVAHTGVRKMVDKNALSLWMRERSDLWVQPKVDGVAVTLVYRDGKLNKAISRGNGLKGEDWTQKVSLISAVPQTVSGPLANSTLQGEIFLQREGHIQQQMGGINARAKVAGLMMRQDDSDTLNSLGVFVWAWPDGPQLMSDRLKELATAGFTLTQTYTRAVKNADEVARVRNEWWKAELPFVTDGVVVRAAKEPESRHWLPGQAEWLVAWKYQPVAQVAEVKAIQFAVGKSGKISVVASLAPVMLDDKKVQRVNIGSVRRWQEWDIAPGDQILVSLAGQGIPRIDDVVWRGAERTKPTPPENRFNSLTCYFASDVCQEQFISRLVWLGAKQVLGLDGIGEAGWRALHQTHRFEHIFSWLLLTPEQLQNTPGIAKSKSAQLWHQFNLARKQPFTRWVMAMGIPLTRAALNASDERSWSQLLFSTEQFWQQLPGTGSGRARQVIEWKENAQIKKLGSWLAAQQITGFEP.

The N6-AMP-lysine intermediate role is filled by Lys124.

The protein belongs to the NAD-dependent DNA ligase family. LigB subfamily.

The enzyme catalyses NAD(+) + (deoxyribonucleotide)n-3'-hydroxyl + 5'-phospho-(deoxyribonucleotide)m = (deoxyribonucleotide)n+m + AMP + beta-nicotinamide D-nucleotide.. In terms of biological role, catalyzes the formation of phosphodiester linkages between 5'-phosphoryl and 3'-hydroxyl groups in double-stranded DNA using NAD as a coenzyme and as the energy source for the reaction. In Escherichia coli (strain ATCC 8739 / DSM 1576 / NBRC 3972 / NCIMB 8545 / WDCM 00012 / Crooks), this protein is DNA ligase B.